The following is a 307-amino-acid chain: Aspartate carbamoyltransferase catalytic subunit (307 aa).

Positions 59 and 60 each coordinate carbamoyl phosphate. L-aspartate is bound at residue K87. Residues R109, H137, and Q140 each contribute to the carbamoyl phosphate site. R173 and R223 together coordinate L-aspartate. G266 and P267 together coordinate carbamoyl phosphate.

Belongs to the aspartate/ornithine carbamoyltransferase superfamily. ATCase family. Heterododecamer (2C3:3R2) of six catalytic PyrB chains organized as two trimers (C3), and six regulatory PyrI chains organized as three dimers (R2).

The enzyme catalyses carbamoyl phosphate + L-aspartate = N-carbamoyl-L-aspartate + phosphate + H(+). It participates in pyrimidine metabolism; UMP biosynthesis via de novo pathway; (S)-dihydroorotate from bicarbonate: step 2/3. Functionally, catalyzes the condensation of carbamoyl phosphate and aspartate to form carbamoyl aspartate and inorganic phosphate, the committed step in the de novo pyrimidine nucleotide biosynthesis pathway. The sequence is that of Aspartate carbamoyltransferase catalytic subunit from Helicobacter pylori (strain Shi470).